A 474-amino-acid chain; its full sequence is tRNA-2-methylthio-N(6)-dimethylallyladenosine synthase (474 aa).

In terms of domain architecture, MTTase N-terminal spans 3 to 120 (KKLHIKTWGC…LPEMINQVKG (118 aa)). The [4Fe-4S] cluster site is built by cysteine 12, cysteine 49, cysteine 83, cysteine 157, cysteine 161, and cysteine 164. In terms of domain architecture, Radical SAM core spans 143 to 375 (RAEGPTAFVS…QERINQQAMA (233 aa)). One can recognise a TRAM domain in the interval 378-441 (RRMLGTTQRI…PNSLRGKVIR (64 aa)).

It belongs to the methylthiotransferase family. MiaB subfamily. Monomer. [4Fe-4S] cluster serves as cofactor.

It localises to the cytoplasm. The catalysed reaction is N(6)-dimethylallyladenosine(37) in tRNA + (sulfur carrier)-SH + AH2 + 2 S-adenosyl-L-methionine = 2-methylsulfanyl-N(6)-dimethylallyladenosine(37) in tRNA + (sulfur carrier)-H + 5'-deoxyadenosine + L-methionine + A + S-adenosyl-L-homocysteine + 2 H(+). Functionally, catalyzes the methylthiolation of N6-(dimethylallyl)adenosine (i(6)A), leading to the formation of 2-methylthio-N6-(dimethylallyl)adenosine (ms(2)i(6)A) at position 37 in tRNAs that read codons beginning with uridine. This Cronobacter sakazakii (strain ATCC BAA-894) (Enterobacter sakazakii) protein is tRNA-2-methylthio-N(6)-dimethylallyladenosine synthase.